The following is a 305-amino-acid chain: Tetraspanin-12 (305 aa).

Topologically, residues methionine 1–cysteine 12 are cytoplasmic. 2 S-palmitoyl cysteine lipidation sites follow: cysteine 9 and cysteine 12. Residues leucine 13 to alanine 33 form a helical membrane-spanning segment. The Extracellular portion of the chain corresponds to tryptophan 34 to tyrosine 59. A helical transmembrane segment spans residues phenylalanine 60 to leucine 80. At glycine 81–asparagine 89 the chain is on the cytoplasmic side. Cysteine 83 carries S-palmitoyl cysteine lipidation. Residues leucine 90–cysteine 110 form a helical membrane-spanning segment. Over glycine 111 to arginine 224 the chain is Extracellular. A helical membrane pass occupies residues phenylalanine 225–leucine 245. Residues tryptophan 246 to leucine 305 lie on the Cytoplasmic side of the membrane.

The protein belongs to the tetraspanin (TM4SF) family. As to quaternary structure, interacts (when palmitoylated) with ADAM10. Interacts with MMP14/MT1-MMP. Component of a complex, at least composed of TSPAN12, FZD4 and norrin (NDP). In terms of processing, palmitoylated; required for interaction with ADAM10. Expressed in the neonatal retinal vasculature but not other retinal tissues. Also detected in the neonatal meningeal vasculature and in nonvascular cell types, such as the smooth muscle cells in the neonatal intestine.

It localises to the cell membrane. Regulator of cell surface receptor signal transduction. Acts as a regulator of membrane proteinases such as ADAM10 and MMP14/MT1-MMP. Activates ADAM10-dependent cleavage activity of amyloid precursor protein (APP). Activates MMP14/MT1-MMP-dependent cleavage activity. Plays a central role in retinal vascularization by regulating norrin (NDP) signal transduction. Acts in concert with norrin (NDP) to promote FZD4 multimerization and subsequent activation of FZD4, leading to promote accumulation of beta-catenin (CTNNB1) and stimulate LEF/TCF-mediated transcriptional programs. Suprisingly, it only activate the norrin (NDP)-dependent activation of FZD4, while it does not activate the Wnt-dependent activation of FZD4, suggesting the existence of a Wnt-independent signaling that also promote accumulation the beta-catenin (CTNNB1). This is Tetraspanin-12 (Tspan12) from Mus musculus (Mouse).